The following is a 620-amino-acid chain: Rhamnogalacturonan endolyase YesW (620 aa).

The N-terminal stretch at 1-37 (MRRSCLMIRRRKRMFTAVTLLVLLVMGTSVCPVKAEG) is a signal peptide. Residues 133–152 (LDKPAGGTTPKGESYTYSAN) are disordered. N152 lines the substrate pocket. Ca(2+) contacts are provided by D153, D158, D160, D162, Q164, and E166. Residue D172 coordinates substrate. Residues D187 and K207 each coordinate a carbohydrate. Ca(2+) is bound by residues D222, D224, D226, K228, and E230. The a carbohydrate site is built by G238 and R255. Ca(2+) is bound by residues H363, D369, D371, D373, K375, E377, D386, H387, H399, D401, D407, D409, R412, G414, E416, and E422. R452 is a substrate binding site. D457, D459, Y462, G464, E466, D496, D498, L500, and E502 together coordinate Ca(2+). 532 to 534 (NGT) is a substrate binding site. Residues D543, L545, D547, R549, E551, N592, and A594 each contribute to the Ca(2+) site. Y595 serves as a coordination point for substrate. A Ca(2+)-binding site is contributed by N596.

The protein belongs to the polysaccharide lyase 11 family. Monomer. Ca(2+) is required as a cofactor. It depends on Mn(2+) as a cofactor.

The protein localises to the secreted. It carries out the reaction Endotype eliminative cleavage of L-alpha-rhamnopyranosyl-(1-&gt;4)-alpha-D-galactopyranosyluronic acid bonds of rhamnogalacturonan I domains in ramified hairy regions of pectin leaving L-rhamnopyranose at the reducing end and 4-deoxy-4,5-unsaturated D-galactopyranosyluronic acid at the non-reducing end.. Pectinolytic enzyme that degrades type I rhamnogalacturonan from plant cell walls and releases oligosaccharide products. Degrades rhamnogalacturonan, polygalacturonic acid, pectic acid and pectin. This Bacillus subtilis (strain 168) protein is Rhamnogalacturonan endolyase YesW (yesW).